A 421-amino-acid polypeptide reads, in one-letter code: Ribulose bisphosphate carboxylase large chain (421 aa).

N68 and T118 together coordinate substrate. Catalysis depends on K120, which acts as the Proton acceptor. K122 lines the substrate pocket. Residues K146, D148, and E149 each contribute to the Mg(2+) site. N6-carboxylysine is present on K146. The active-site Proton acceptor is H239. 3 residues coordinate substrate: R240, H272, and S324.

The protein belongs to the RuBisCO large chain family. Type I subfamily. In terms of assembly, heterohexadecamer of 8 large chains and 8 small chains; disulfide-linked. The disulfide link is formed within the large subunit homodimers. Mg(2+) serves as cofactor. In terms of processing, the disulfide bond which can form in the large chain dimeric partners within the hexadecamer appears to be associated with oxidative stress and protein turnover.

The protein localises to the plastid. It localises to the chloroplast. It carries out the reaction 2 (2R)-3-phosphoglycerate + 2 H(+) = D-ribulose 1,5-bisphosphate + CO2 + H2O. It catalyses the reaction D-ribulose 1,5-bisphosphate + O2 = 2-phosphoglycolate + (2R)-3-phosphoglycerate + 2 H(+). RuBisCO catalyzes two reactions: the carboxylation of D-ribulose 1,5-bisphosphate, the primary event in carbon dioxide fixation, as well as the oxidative fragmentation of the pentose substrate in the photorespiration process. Both reactions occur simultaneously and in competition at the same active site. In Aegilops tauschii (Tausch's goatgrass), this protein is Ribulose bisphosphate carboxylase large chain (rbcL).